The sequence spans 520 residues: Cholesterol side-chain cleavage enzyme, mitochondrial (520 aa).

Residues Met1–Gly39 constitute a mitochondrion transit peptide. Residue Cys461 coordinates heme.

It belongs to the cytochrome P450 family. In terms of assembly, interacts with FDX1/adrenodoxin. Requires heme as cofactor. Detected in adrenal cortex and corpus luteum (at protein level).

Its subcellular location is the mitochondrion inner membrane. The catalysed reaction is 6 reduced [adrenodoxin] + cholesterol + 3 O2 + 6 H(+) = 4-methylpentanal + pregnenolone + 6 oxidized [adrenodoxin] + 4 H2O. The enzyme catalyses 2 reduced [adrenodoxin] + cholesterol + O2 + 2 H(+) = (22R)-hydroxycholesterol + 2 oxidized [adrenodoxin] + H2O. It carries out the reaction (22R)-hydroxycholesterol + 2 reduced [adrenodoxin] + O2 + 2 H(+) = (20R,22R)-20,22-dihydroxycholesterol + 2 oxidized [adrenodoxin] + H2O. It catalyses the reaction (20R,22R)-20,22-dihydroxycholesterol + 2 reduced [adrenodoxin] + O2 + 2 H(+) = 4-methylpentanal + pregnenolone + 2 oxidized [adrenodoxin] + 2 H2O. It functions in the pathway lipid metabolism; C21-steroid hormone metabolism. Its pathway is steroid metabolism; cholesterol metabolism. Its function is as follows. A cytochrome P450 monooxygenase that catalyzes the side-chain hydroxylation and cleavage of cholesterol to pregnenolone, the precursor of most steroid hormones. Catalyzes three sequential oxidation reactions of cholesterol, namely the hydroxylation at C22 followed with the hydroxylation at C20 to yield 20R,22R-hydroxycholesterol that is further cleaved between C20 and C22 to yield the C21-steroid pregnenolone and 4-methylpentanal. Mechanistically, uses molecular oxygen inserting one oxygen atom into a substrate and reducing the second into a water molecule. Two electrons are provided by NADPH via a two-protein mitochondrial transfer system comprising flavoprotein FDXR (adrenodoxin/ferredoxin reductase) and nonheme iron-sulfur protein FDX1 or FDX2 (adrenodoxin/ferredoxin). This is Cholesterol side-chain cleavage enzyme, mitochondrial (CYP11A1) from Bos taurus (Bovine).